The following is a 436-amino-acid chain: Protein 60A (436 aa).

An N-terminal signal peptide occupies residues 1-27; the sequence is MTASLVVLPSLWLILIIFTAPYTHCTQ. Positions 28–317 are excised as a propeptide; it reads SGIYIDNGKD…STLHQRKKSK (290 aa). Asn102, Asn114, Asn217, and Asn229 each carry an N-linked (GlcNAc...) asparagine glycan. Residues 293-322 form a disordered region; the sequence is IKSTSGHSTQKRTKRSTLHQRKKSKSEPVN. Basic residues predominate over residues 301–316; the sequence is TQKRTKRSTLHQRKKS. Cystine bridges form between Cys335/Cys401, Cys364/Cys433, and Cys368/Cys435. An N-linked (GlcNAc...) asparagine glycan is attached at Asn377.

Belongs to the TGF-beta family. Homodimer; disulfide-linked.

Its subcellular location is the secreted. The protein is Protein 60A (gbb) of Drosophila virilis (Fruit fly).